We begin with the raw amino-acid sequence, 1069 residues long: Regulator of nonsense transcripts 1 (1069 aa).

The tract at residues 1–86 is disordered; that stretch reads MDDSDDEYSR…SEKSLTEEQH (86 aa). Polar residues predominate over residues 28-50; the sequence is IGNTQDSQFAYEQFSVPTQSSQA. The span at 51-65 shows a compositional bias: low complexity; that stretch reads TDLLPGGTDGTTNDL. A compositionally biased stretch (basic and acidic residues) spans 77-86; it reads SEKSLTEEQH. Positions 87 to 244 constitute a Upf1 CH-rich domain; it reads EQKLPEHACR…VRMEELWRDH (158 aa). 12 residues coordinate Zn(2+): Cys95, Cys98, Cys109, Cys112, Cys117, His127, His131, His137, Cys155, Cys158, Cys181, and Cys185. The tract at residues 95-127 is C3H; that stretch reads CRYCGISDPLCVAKCTVCRKWFCNSNDGTSGGH. Residues 109 to 137 are CC/SHH/C; it reads CTVCRKWFCNSNDGTSGGHIVHHMVRSQH. A C4 region spans residues 155–185; it reads CYRCGSKNVFNLGFIPGKKDQVVVIICRTPC. Residues Gln450, 467-474, Gln639, Tyr676, and Glu807 contribute to the ATP site; that span reads GPPGTGKT. The tract at residues 966 to 1069 is disordered; sequence ARNQKDRRRG…MDDLLFSQDC (104 aa). Over residues 991 to 1013 the composition is skewed to low complexity; it reads SQGMMSQQSQQYPPQGASSQSQY.

It belongs to the DNA2/NAM7 helicase family. In terms of processing, phosphorylated probably by smg-1. Smg-3 and smg-4 are required for phosphorylation.

The protein resides in the cytoplasm. It carries out the reaction ATP + H2O = ADP + phosphate + H(+). RNA-dependent helicase required for nonsense-mediated decay (NMD) of aberrant mRNAs containing premature stop codons and modulates the expression level of normal mRNAs. Is recruited to mRNAs upon translation termination and undergoes a cycle of phosphorylation and dephosphorylation; its phosphorylation appears to be a key step in NMD. The formation of an smg-2-3-4 surveillance complex is believed to activate NMD. The sequence is that of Regulator of nonsense transcripts 1 (smg-2) from Caenorhabditis elegans.